Consider the following 213-residue polypeptide: N-(5'-phosphoribosyl)anthranilate isomerase (213 aa).

This sequence belongs to the TrpF family.

It catalyses the reaction N-(5-phospho-beta-D-ribosyl)anthranilate = 1-(2-carboxyphenylamino)-1-deoxy-D-ribulose 5-phosphate. It participates in amino-acid biosynthesis; L-tryptophan biosynthesis; L-tryptophan from chorismate: step 3/5. The polypeptide is N-(5'-phosphoribosyl)anthranilate isomerase (Rhodopseudomonas palustris (strain ATCC BAA-98 / CGA009)).